A 218-amino-acid polypeptide reads, in one-letter code: Histone H1.1 (218 aa).

The tract at residues 1–42 is disordered; sequence MSEVALPAPAASTSPEKPSAGKKAKKPAKAAAAAKKKPAGPS. Residue Ser-2 is modified to N-acetylserine. 2 positions are modified to phosphoserine: Ser-2 and Ser-12. Lys-17 is modified (N6-acetyllysine). Residues 20 to 38 are compositionally biased toward basic residues; sequence AGKKAKKPAKAAAAAKKKP. Lys-37 carries the N6-(beta-hydroxybutyryl)lysine modification. The 74-residue stretch at 39–112 folds into the H15 domain; it reads AGPSVSELIV…GASGSFKLNK (74 aa). The residue at position 44 (Ser-44) is a Phosphoserine. An N6-(beta-hydroxybutyryl)lysine modification is found at Lys-55. Residue Arg-57 is modified to Citrulline. Lys-67 is modified (N6-(beta-hydroxybutyryl)lysine). N6-acetyllysine is present on Lys-78. An N6-(beta-hydroxybutyryl)lysine modification is found at Lys-88. Lys-93 bears the N6-(beta-hydroxybutyryl)lysine; alternate mark. Lys-93 is subject to N6-acetyllysine; alternate. Ser-107 is subject to Phosphoserine; by PKC. At Lys-109 the chain carries N6-(beta-hydroxybutyryl)lysine. The interval 116-218 is disordered; it reads SVDAKPTATK…KPKKAAPKKK (103 aa). The span at 119 to 149 shows a compositional bias: low complexity; that stretch reads AKPTATKVATKTKVTSASKKPKKASGAAAAK. Lys-125 is modified (N6-acetyllysine). Basic residues-rich tracts occupy residues 150-183 and 190-218; these read KSVK…KKVA and KAVK…PKKK. Thr-206 carries the post-translational modification Phosphothreonine.

It belongs to the histone H1/H5 family. As to quaternary structure, interacts with DFFB. H1 histones are progressively phosphorylated during the cell cycle, becoming maximally phosphorylated during late G2 phase and M phase, and being dephosphorylated sharply thereafter. Post-translationally, citrullination at Arg-57 (H1R54ci) by PADI4 takes place within the DNA-binding site of H1 and results in its displacement from chromatin and global chromatin decondensation, thereby promoting pluripotency and stem cell maintenance.

It localises to the nucleus. The protein localises to the chromosome. H1 histones bind to linker DNA between nucleosomes forming the macromolecular structure known as the chromatin fiber. H1 histones are necessary for the condensation of nucleosome chains into higher-order structured fibers. Also acts as a regulator of individual gene transcription through chromatin remodeling. This is Histone H1.1 from Bos taurus (Bovine).